Reading from the N-terminus, the 466-residue chain is Ribulose bisphosphate carboxylase large chain (466 aa).

Lys4 is subject to N6,N6,N6-trimethyllysine. Substrate contacts are provided by Asn113 and Thr163. The active-site Proton acceptor is the Lys165. Position 167 (Lys167) interacts with substrate. Positions 191, 193, and 194 each coordinate Mg(2+). Residue Lys191 is modified to N6-carboxylysine. Residue His284 is the Proton acceptor of the active site. Substrate contacts are provided by Arg285, His317, and Ser369.

Belongs to the RuBisCO large chain family. Type I subfamily. As to quaternary structure, heterohexadecamer of 8 large chains and 8 small chains; disulfide-linked. The disulfide link is formed within the large subunit homodimers. Mg(2+) is required as a cofactor. Post-translationally, the disulfide bond which can form in the large chain dimeric partners within the hexadecamer appears to be associated with oxidative stress and protein turnover.

Its subcellular location is the plastid. The protein resides in the chloroplast. The catalysed reaction is 2 (2R)-3-phosphoglycerate + 2 H(+) = D-ribulose 1,5-bisphosphate + CO2 + H2O. It carries out the reaction D-ribulose 1,5-bisphosphate + O2 = 2-phosphoglycolate + (2R)-3-phosphoglycerate + 2 H(+). Functionally, ruBisCO catalyzes two reactions: the carboxylation of D-ribulose 1,5-bisphosphate, the primary event in carbon dioxide fixation, as well as the oxidative fragmentation of the pentose substrate in the photorespiration process. Both reactions occur simultaneously and in competition at the same active site. In Nelsonia canescens (Blue pussyleaf), this protein is Ribulose bisphosphate carboxylase large chain.